Reading from the N-terminus, the 334-residue chain is MDRTLVQEILEVVEQAAIASAQLTGLGQKDEADAAAVEAMRKRMGTIQMQGRIVIGEGERDEAPMLYIGEEVGSGTGPGVDFAVDPCEGTNLCANSQRGSMAVLAASDRGGLFNAPDFYMNKLAAPPAAKGKVDIRKTPTENIKILSDCLGIAISDLTIVVMDRARHKNLVSEIRSTGARIQPISDGDVQAAIACGFEGTGTHCLMGIGAAPEGVISAAAMRALGGHFQGQLVYDPAIAQTSEWADYTKEGNIKRLNEMGITDIDKIYEANELASGENVAFAGSGITDGLLFDGVKFEKDCTRTSSLVISTLDQTARFTNTVHIKDGAQSISLK.

The Mn(2+) site is built by Asp33, Glu57, Asp85, and Glu88. Residues 88–90 (EGT), Tyr119, 164–166 (RAR), and 186–188 (DGD) each bind substrate. Glu213 serves as a coordination point for Mn(2+).

It belongs to the FBPase class 2 family. As to quaternary structure, homotetramer. It depends on Mn(2+) as a cofactor.

It carries out the reaction beta-D-fructose 1,6-bisphosphate + H2O = beta-D-fructose 6-phosphate + phosphate. The catalysed reaction is D-sedoheptulose 1,7-bisphosphate + H2O = D-sedoheptulose 7-phosphate + phosphate. The protein operates within carbohydrate biosynthesis; Calvin cycle. Its function is as follows. Catalyzes the hydrolysis of fructose 1,6-bisphosphate (Fru 1,6-P2) and sedoheptulose 1,7-bisphosphate (Sed 1,7-P2) to fructose 6-phosphate and sedoheptulose 7-phosphate, respectively. In Prochlorococcus marinus (strain NATL1A), this protein is D-fructose 1,6-bisphosphatase class 2/sedoheptulose 1,7-bisphosphatase.